The primary structure comprises 455 residues: MSASTVSITASPRTIRRTPVLSGEKKSNFDFPPSESHANAAIGESSAGTNKDLIRAEAAGERSNTYDVGPVTRKSGSTATGTNTTTTQRRTRKSQGNKIDRGKWKTVVRVFAKQFGALLLLVGLIQLIRKLTLKDSSLSSSNFPIETEMVLSELESRISAVDGLVKTTTKMMQVQVEFLDKKMDSESRALRQTIDSTSSVLHSELKKVESKTERLQVSVDELNAKPLVSREELERVYEELKKGKVGDSDVNIDKLRAYARDIVEKEIGKHVADGLGRVDYALASGGAFVMGHSDPFLVGNGRNWFGTSRRRVHSKAVKMLTPSFGEPGQCFPLKGSNGYVLVRLRAPIIPEAVTLEHVSKAVAYDRSSAPKDCRVSGWLGDIDMETETMPLLTEFSYDLDRSNAQTFDIADSAHSGLVNTVRLDFNSNHGSSSHTCIYRFRVHGRELDSVSVAHA.

The span at 1-12 (MSASTVSITASP) shows a compositional bias: polar residues. Residues 1–99 (MSASTVSITA…RTRKSQGNKI (99 aa)) form a disordered region. At S2 the chain carries N-acetylserine. Topologically, residues 2–105 (SASTVSITAS…GNKIDRGKWK (104 aa)) are nuclear. Residue S63 is modified to Phosphoserine. The segment covering 74-88 (KSGSTATGTNTTTTQ) has biased composition (low complexity). The short motif at 88–95 (QRRTRKSQ) is the Nuclear localization signal element. The chain crosses the membrane as a helical span at residues 106 to 128 (TVVRVFAKQFGALLLLVGLIQLI). Over 129–455 (RKLTLKDSSL…ELDSVSVAHA (327 aa)) the chain is Perinuclear space. The stretch at 201–225 (LHSELKKVESKTERLQVSVDELNAK) forms a coiled coil. Residues 285–447 (GGAFVMGHSD…YRFRVHGREL (163 aa)) enclose the SUN domain.

As to quaternary structure, forms homomers (e.g. dimers, trimers and tetramers) and heteromers with SUN1. Interacts with SUN3, SUN4 and TIK. Core component of the LINC complex which is composed of inner nuclear membrane SUN domain-containing proteins coupled to outer nuclear membrane WIP and WIT proteins. The LINC complex also involves nucleoskeletal proteins CRWN/LINC and possibly KAKU4 and the cytoskeletal myosin KAKU1. Interacts with LINC1, WIP1, WIP2 and WIP3 at the nuclear envelope (NE). Interacts with SINE1, SINE2, SINE3 and SINE4. Interacts with NEAP1, NEA2 and NEAP3. In terms of tissue distribution, expressed in roots, hypocotyls, cotyledons and leaves and inflorescences.

The protein resides in the nucleus inner membrane. It localises to the cytoplasm. The protein localises to the cytoskeleton. It is found in the phragmoplast. Its subcellular location is the endoplasmic reticulum membrane. The protein resides in the nucleus envelope. Component of SUN-protein-containing multivariate complexes also called LINC complexes which link the nucleoskeleton and cytoskeleton by providing versatile outer nuclear membrane attachment sites for cytoskeletal filaments. Required for the maintenance and/or formation of polarized nuclear shape in root hairs. Modulates the anchoring and mobility of WIP proteins in the nuclear envelope (NE). In association with SUN1, may be involved in telomere attachment to nuclear envelope in the prophase of meiosis. As component of the SUN-WIP-WIT2-KAKU1 complex, mediates the transfer of cytoplasmic forces to the nuclear envelope (NE), leading to nuclear shape changes. In Arabidopsis thaliana (Mouse-ear cress), this protein is SUN domain-containing protein 2.